The chain runs to 177 residues: Cell division protein ZapC (177 aa).

This sequence belongs to the ZapC family. Interacts directly with FtsZ.

The protein resides in the cytoplasm. In terms of biological role, contributes to the efficiency of the cell division process by stabilizing the polymeric form of the cell division protein FtsZ. Acts by promoting interactions between FtsZ protofilaments and suppressing the GTPase activity of FtsZ. The polypeptide is Cell division protein ZapC (Shewanella oneidensis (strain ATCC 700550 / JCM 31522 / CIP 106686 / LMG 19005 / NCIMB 14063 / MR-1)).